A 397-amino-acid chain; its full sequence is Phosphoglycerate kinase (397 aa).

Substrate-binding positions include 21–23 (DVN), Arg-36, 59–62 (HFGR), Arg-119, and Arg-152. ATP-binding positions include Lys-202, Glu-324, and 354 to 357 (GGDT).

This sequence belongs to the phosphoglycerate kinase family. In terms of assembly, monomer.

The protein localises to the cytoplasm. It catalyses the reaction (2R)-3-phosphoglycerate + ATP = (2R)-3-phospho-glyceroyl phosphate + ADP. Its pathway is carbohydrate degradation; glycolysis; pyruvate from D-glyceraldehyde 3-phosphate: step 2/5. The chain is Phosphoglycerate kinase from Cereibacter sphaeroides (strain ATCC 17025 / ATH 2.4.3) (Rhodobacter sphaeroides).